We begin with the raw amino-acid sequence, 416 residues long: UDP-N-acetylglucosamine 1-carboxyvinyltransferase (416 aa).

22–23 contacts phosphoenolpyruvate; it reads KN. Arg-92 lines the UDP-N-acetyl-alpha-D-glucosamine pocket. Residue Cys-116 is the Proton donor of the active site. Residue Cys-116 is modified to 2-(S-cysteinyl)pyruvic acid O-phosphothioketal. Residues 121–125, Asp-304, and Ile-326 each bind UDP-N-acetyl-alpha-D-glucosamine; that span reads RPVDQ.

This sequence belongs to the EPSP synthase family. MurA subfamily.

It localises to the cytoplasm. It catalyses the reaction phosphoenolpyruvate + UDP-N-acetyl-alpha-D-glucosamine = UDP-N-acetyl-3-O-(1-carboxyvinyl)-alpha-D-glucosamine + phosphate. Its pathway is cell wall biogenesis; peptidoglycan biosynthesis. Its function is as follows. Cell wall formation. Adds enolpyruvyl to UDP-N-acetylglucosamine. In Cupriavidus metallidurans (strain ATCC 43123 / DSM 2839 / NBRC 102507 / CH34) (Ralstonia metallidurans), this protein is UDP-N-acetylglucosamine 1-carboxyvinyltransferase.